A 512-amino-acid polypeptide reads, in one-letter code: Probable anion transporter 3, chloroplastic (512 aa).

The transit peptide at 1 to 44 (MATVGSLKPLHHSSCSSSFPRNPIVNRKALLGFVFDSARKNQIR) directs the protein to the chloroplast. 12 helical membrane passes run 102-124 (VILT…VAVV), 139-159 (VVQS…GALV), 167-187 (VLAW…WAAA), 191-211 (LALL…MPSM), 228-248 (VGIS…LTPL), 250-270 (LSSI…LLWV), 324-344 (WAII…LSWM), 359-379 (AAWF…YAGA), 396-416 (KIMQ…LNFA), 422-442 (AAVF…GFLL), 462-482 (AGTL…QWLG), and 486-506 (AFLT…LLFA).

This sequence belongs to the major facilitator superfamily. Sodium/anion cotransporter (TC 2.A.1.14) family. In terms of tissue distribution, expressed in roots.

Its subcellular location is the plastid. It is found in the chloroplast membrane. Its function is as follows. Inorganic phosphate and probable anion transporter. The chain is Probable anion transporter 3, chloroplastic (ANTR3) from Arabidopsis thaliana (Mouse-ear cress).